The sequence spans 593 residues: Aspartate--tRNA ligase (593 aa).

Residue Glu-180 participates in L-aspartate binding. The tract at residues 204–207 (QIFK) is aspartate. Residue Arg-226 coordinates L-aspartate. ATP contacts are provided by residues 226-228 (RDE) and Gln-235. His-453 is a binding site for L-aspartate. Glu-487 contributes to the ATP binding site. Residue Arg-494 coordinates L-aspartate. 539 to 542 (GLDR) is a binding site for ATP.

The protein belongs to the class-II aminoacyl-tRNA synthetase family. Type 1 subfamily. Homodimer.

It localises to the cytoplasm. It catalyses the reaction tRNA(Asp) + L-aspartate + ATP = L-aspartyl-tRNA(Asp) + AMP + diphosphate. In terms of biological role, catalyzes the attachment of L-aspartate to tRNA(Asp) in a two-step reaction: L-aspartate is first activated by ATP to form Asp-AMP and then transferred to the acceptor end of tRNA(Asp). In Clostridium botulinum (strain Okra / Type B1), this protein is Aspartate--tRNA ligase.